The chain runs to 101 residues: Small ribosomal subunit protein uS14A (101 aa).

The interval 31–74 (IRKPSTPEADRAAAQAALQRLPRDASPVRLRNRDAADGRPRGHL) is disordered. A compositionally biased stretch (basic and acidic residues) spans 61-70 (RNRDAADGRP).

The protein belongs to the universal ribosomal protein uS14 family. In terms of assembly, part of the 30S ribosomal subunit. Contacts proteins S3 and S10.

Binds 16S rRNA, required for the assembly of 30S particles and may also be responsible for determining the conformation of the 16S rRNA at the A site. In Nocardia farcinica (strain IFM 10152), this protein is Small ribosomal subunit protein uS14A.